Consider the following 320-residue polypeptide: Polycomb complex protein BMI-1-A (320 aa).

The RING-type zinc-finger motif lies at 18–57 (CVLCGGYFIDATTIIECLHSFCKMCIVRYLETSKYCPICD). A Nuclear localization signal motif is present at residues 81-95 (KLVPGLFKNEMKRRR). Residues 234-320 (ITHPQEGLNN…ALNGSSTSSG (87 aa)) form a disordered region. The span at 262–281 (VPSTSSPLPSPSTLVQPSQP) shows a compositional bias: low complexity. Polar residues predominate over residues 285–304 (HISSPINGTTMTSPNRQFNF).

Component of a PRC1-like complex. Homodimer. Interacts with cbx2.

The protein localises to the nucleus. Its function is as follows. Component of a Polycomb group (PcG) multiprotein PRC1-like complex, a complex class required to maintain the transcriptionally repressive state of many genes, including Hox genes, throughout development. PcG PRC1 complex acts via chromatin remodeling and modification of histones; it mediates monoubiquitination of histone H2A 'Lys-119', rendering chromatin heritably changed in its expressibility. In the PRC1 complex, it is required to stimulate the E3 ubiquitin-protein ligase activity of rnf2. The sequence is that of Polycomb complex protein BMI-1-A (bmi1a) from Danio rerio (Zebrafish).